Consider the following 325-residue polypeptide: tRNA N(3)-methylcytidine methyltransferase Mettl2 (325 aa).

S-adenosyl-L-methionine is bound by residues W96 and Y100. S-adenosyl-L-homocysteine-binding residues include Y100, H112, E138, G140, D165, D191, and I212. The S-adenosyl-L-methionine site is built by G140, D165, D191, and I212.

This sequence belongs to the methyltransferase superfamily. METL family. As to quaternary structure, interacts with Psn. Widely expressed. Expressed in ovaries, head, thorax and abdomen of adult flies, and in the CNS of third instar larvae. Isoform 2 is predominantly expressed in larvae and in adult tissues that have been tested.

In terms of biological role, probable methyltransferase. The sequence is that of tRNA N(3)-methylcytidine methyltransferase Mettl2 from Drosophila melanogaster (Fruit fly).